The primary structure comprises 72 residues: Translation initiation factor IF-1 (72 aa).

The S1-like domain occupies 1–72; it reads MSKQDVIEVE…TRGRIVYRYK (72 aa).

Belongs to the IF-1 family. As to quaternary structure, component of the 30S ribosomal translation pre-initiation complex which assembles on the 30S ribosome in the order IF-2 and IF-3, IF-1 and N-formylmethionyl-tRNA(fMet); mRNA recruitment can occur at any time during PIC assembly.

Its subcellular location is the cytoplasm. In terms of biological role, one of the essential components for the initiation of protein synthesis. Stabilizes the binding of IF-2 and IF-3 on the 30S subunit to which N-formylmethionyl-tRNA(fMet) subsequently binds. Helps modulate mRNA selection, yielding the 30S pre-initiation complex (PIC). Upon addition of the 50S ribosomal subunit IF-1, IF-2 and IF-3 are released leaving the mature 70S translation initiation complex. In Pelotomaculum thermopropionicum (strain DSM 13744 / JCM 10971 / SI), this protein is Translation initiation factor IF-1.